A 153-amino-acid chain; its full sequence is MTPVRSSSLSLLLLLSLVALVKAGIMIPQSPGCPKTEDKNFPQHVRVNLNILNRSTPARRPSDYSKRFTSPWTLQRNEDPERYSSVIWEAKCSHSGCINAEGKEDHHMNSVPIQQEILVLRREPRHCPNSFRLEKVMVTVGCTCVTPIVRHIS.

The first 23 residues, 1-23, serve as a signal peptide directing secretion; sequence MTPVRSSSLSLLLLLSLVALVKA. N-linked (GlcNAc...) asparagine glycosylation occurs at Asn53. 2 cysteine pairs are disulfide-bonded: Cys92/Cys142 and Cys97/Cys144.

It belongs to the IL-17 family. As to quaternary structure, homodimer. Forms complexes with IL17RA and IL17RC receptors with 2:1 binding stoichiometry: two receptor chains for one interleukin molecule. IL17A homodimer preferentially drives the formation of IL17RA-IL17RC heterodimeric receptor complex. IL17A homodimer adopts an asymmetrical ternary structure with one IL17RA molecule, allowing for high affinity interactions of one IL17A monomer with one IL17RA molecule (via D1 and D2 domains), while disfavoring binding of a second IL17RA molecule on the other IL17A monomer. Heterodimer with IL17F. IL17A-IL17F forms complexes with IL17RA-IL17RC, but with lower affinity when compared to IL17A homodimer. IL17RA and IL17RC chains cannot distinguish between IL17A and IL17F molecules, potentially enabling the formation of topologically distinct complexes. Highly expressed in adult heart, skin, and intestinal tissues, such as jejunum and ileum.

Its subcellular location is the secreted. In terms of biological role, effector cytokine of innate and adaptive immune system involved in antimicrobial host defense and maintenance of tissue integrity. Signals via IL17RA-IL17RC heterodimeric receptor complex, triggering homotypic interaction of IL17RA and IL17RC chains with TRAF3IP2 adapter. This leads to downstream TRAF6-mediated activation of NF-kappa-B and MAPkinase pathways ultimately resulting in transcriptional activation of cytokines, chemokines, antimicrobial peptides and matrix metalloproteinases, with potential strong immune inflammation. Plays an important role in connecting T cell-mediated adaptive immunity and acute inflammatory response to destroy extracellular bacteria and fungi. As a signature effector cytokine of T-helper 17 cells (Th17), primarily induces neutrophil activation and recruitment at infection and inflammatory sites. In airway epithelium, mediates neutrophil chemotaxis via induction of CXCL1 and CXCL5 chemokines. In secondary lymphoid organs, contributes to germinal center formation by regulating the chemotactic response of B cells to CXCL12 and CXCL13, enhancing retention of B cells within the germinal centers, B cell somatic hypermutation rate and selection toward plasma cells. Effector cytokine of a subset of gamma-delta T cells that functions as part of an inflammatory circuit downstream IL1B, TLR2 and IL23A-IL12B to promote neutrophil recruitment for efficient bacterial clearance. Effector cytokine of innate immune cells including invariant natural killer cell (iNKT) and group 3 innate lymphoid cells that mediate initial neutrophilic inflammation. Involved in the maintenance of the integrity of epithelial barriers during homeostasis and pathogen infection. Upon acute injury, has a direct role in epithelial barrier formation by regulating OCLN localization and tight junction biogenesis. As part of the mucosal immune response induced by commensal bacteria, enhances host's ability to resist pathogenic bacterial and fungal infections by promoting neutrophil recruitment and antimicrobial peptides release. In synergy with IL17F, mediates the production of antimicrobial beta-defensins DEFB1, DEFB103A, and DEFB104A by mucosal epithelial cells, limiting the entry of microbes through the epithelial barriers. Involved in antiviral host defense through various mechanisms. Enhances immunity against West Nile virus by promoting T cell cytotoxicity. May play a beneficial role in influenza A virus (H5N1) infection by enhancing B cell recruitment and immune response in the lung. Contributes to influenza A virus (H1N1) clearance by driving the differentiation of B-1a B cells, providing for production of virus-specific IgM antibodies at first line of host defense. The sequence is that of Interleukin-17A (IL17A) from Sus scrofa (Pig).